We begin with the raw amino-acid sequence, 451 residues long: Adenylyltransferase and sulfurtransferase MOCS3 (451 aa).

Positions 42–62 (GEDSDEAEESSNDMPTPQTKL) are disordered. Residues 43 to 52 (EDSDEAEESS) are compositionally biased toward acidic residues. T60 is modified (phosphothreonine). ATP contacts are provided by residues G99, D120, 127–131 (SNLHR), K144, and 188–189 (DN). 2 residues coordinate Zn(2+): C229 and C232. The Glycyl thioester intermediate; for adenylyltransferase activity role is filled by C246. Zn(2+) is bound by residues C304 and C307. Residues 353–449 (QSQPHLLLDV…WTGSVDATFP (97 aa)) form the Rhodanese domain. C408 acts as the Cysteine persulfide intermediate; for sulfurtransferase activity in catalysis.

The protein in the N-terminal section; belongs to the HesA/MoeB/ThiF family. UBA4 subfamily. Zn(2+) is required as a cofactor.

Its subcellular location is the cytoplasm. The protein localises to the cytosol. It catalyses the reaction [molybdopterin-synthase sulfur-carrier protein]-C-terminal Gly-Gly + ATP + H(+) = [molybdopterin-synthase sulfur-carrier protein]-C-terminal Gly-Gly-AMP + diphosphate. The catalysed reaction is [molybdopterin-synthase sulfur-carrier protein]-C-terminal Gly-Gly-AMP + S-sulfanyl-L-cysteinyl-[cysteine desulfurase] + AH2 = [molybdopterin-synthase sulfur-carrier protein]-C-terminal-Gly-aminoethanethioate + L-cysteinyl-[cysteine desulfurase] + A + AMP + 2 H(+). Its pathway is tRNA modification; 5-methoxycarbonylmethyl-2-thiouridine-tRNA biosynthesis. The protein operates within cofactor biosynthesis; molybdopterin biosynthesis. Its function is as follows. Plays a central role in 2-thiolation of mcm(5)S(2)U at tRNA wobble positions of cytosolic tRNA(Lys), tRNA(Glu) and tRNA(Gln). Also essential during biosynthesis of the molybdenum cofactor. Acts by mediating the C-terminal thiocarboxylation of sulfur carriers URM1 and MOCS2A. Its N-terminus first activates URM1 and MOCS2A as acyl-adenylates (-COAMP), then the persulfide sulfur on the catalytic cysteine is transferred to URM1 and MOCS2A to form thiocarboxylation (-COSH) of their C-terminus. The reaction probably involves hydrogen sulfide that is generated from the persulfide intermediate and that acts as a nucleophile towards URM1 and MOCS2A. Subsequently, a transient disulfide bond is formed. Does not use thiosulfate as sulfur donor; NFS1 probably acting as a sulfur donor for thiocarboxylation reactions. This is Adenylyltransferase and sulfurtransferase MOCS3 from Drosophila persimilis (Fruit fly).